An 890-amino-acid polypeptide reads, in one-letter code: MTQYTPMIQQYLKVKADYQDAFLFFRLGDFYEMFFEDAVKAAHELEITLTSRDGGSSERIPMCGVPYHAAKNYIEQLVEKGYKVAVCEQVEDPKTAKGVVRREVVQLITPGTMMEGRTIDEKENNFLAALTHFEDGSYALACNDLTTGQNTVTLLTGSVEDILLEVYATGSKEIVVDSSFSKDELNKLTETLKMTISYEDATAIPEGLEHLVKNVSQAKLIKAVGRLFNYVIRTQKRSLDHLQPVEIYYTNQFMKIDVHSKRNLELTETLRTKEKTGSLLWLLDKTKTAMGGRMLKQWMERPLIQKERIEERLEMVETFVNDYFLREDLKEKLKEVYDLERLAGKVAFGNVNARDLLQLRRSLLQVPAILEAISLLDNAYAARLIQGADPCESLTELLGRSIQENPPLSIKDGDIIKDGYNDKLDQYRYVSKNGKTWIAELEKRERDITGIKSLKIGYNRIFGYYIEVTKANLGALPEGRYERKQTLANAERFITDELKEKETLILEAEEKIVQLEYDLFTALREEVKVFIPKLQHLAKVISELDVLQSFATVSEEEQFVKPVLTTKREIFIKDGRHPVVEKVLNGKLYVPNDCIMPENMDVFLITGPNMSGKSTYMRQLALVTVMSQIGCFVPATEAVLPVFDQIFTRIGAADDLISGQSTFMVEMLEAKNAIANASERSLILFDEIGRGTSTYDGMALAQAIIEHIHDQIGAKTLFSTHYHELTVLEDSLDQLKNVHVSAIEENGKVVFLHKIQDGAADKSYGIHVAQLAELPDSLIARAKEVLAQLEGQEEIVIPKRVEVKEQEVIPEPVVVKEEPVAIEETKVDNKEESQLSFFGTEQSSKKQDKPVLDVKETAVLTQIKKIDLLDMTPLEAMNELYRLQKKLKKG.

Residue 607-614 (GPNMSGKS) coordinates ATP.

It belongs to the DNA mismatch repair MutS family.

Its function is as follows. This protein is involved in the repair of mismatches in DNA. It is possible that it carries out the mismatch recognition step. This protein has a weak ATPase activity. The chain is DNA mismatch repair protein MutS from Bacillus thuringiensis subsp. konkukian (strain 97-27).